Here is a 91-residue protein sequence, read N- to C-terminus: Probable Fe(2+)-trafficking protein (91 aa).

This sequence belongs to the Fe(2+)-trafficking protein family.

Its function is as follows. Could be a mediator in iron transactions between iron acquisition and iron-requiring processes, such as synthesis and/or repair of Fe-S clusters in biosynthetic enzymes. The chain is Probable Fe(2+)-trafficking protein from Xanthomonas euvesicatoria pv. vesicatoria (strain 85-10) (Xanthomonas campestris pv. vesicatoria).